The following is a 1199-amino-acid chain: Chromosome partition protein Smc (1199 aa).

Proline 32 to asparagine 39 serves as a coordination point for ATP. A coiled-coil region spans residues glycine 192–methionine 528. Positions proline 546 to leucine 658 constitute an SMC hinge domain. The stretch at isoleucine 691 to lysine 1051 forms a coiled coil.

Belongs to the SMC family. In terms of assembly, homodimer.

Its subcellular location is the cytoplasm. Its function is as follows. Required for chromosome condensation and partitioning. This chain is Chromosome partition protein Smc, found in Methanococcus voltae.